The sequence spans 287 residues: MKRIFLLIATNLAVLLVASIVMSILGVNTSTMGGLLVFAAIFGFGGAFISLAISKWMAKKTMGCEVITTPRDSTERWLLDTVARQAQQAGIKMPEVAIYQSPEMNAFATGPSKDNSLVAVSTGLLYGMSQDEVEGVLAHEVSHVANGDMVTLTLIQGVVNTFVIFAARVVAGIINNFVSSNDEEGEGLGMFAYMAVVFVLDMLFGILASIIVAYFSRIREYRADEGAARLAGKHKMIAALERLRQGPESSAMPAQMSAFGINGKRSMAELMMSHPPLEKRIAALQTR.

Transmembrane regions (helical) follow at residues 4-24 (IFLL…VMSI) and 33-53 (GGLL…SLAI). Residue histidine 139 participates in Zn(2+) binding. Residue glutamate 140 is part of the active site. Histidine 143 contacts Zn(2+). 2 helical membrane-spanning segments follow: residues 154-174 (LIQG…AGII) and 195-215 (AVVF…VAYF). Glutamate 220 provides a ligand contact to Zn(2+).

This sequence belongs to the peptidase M48B family. Zn(2+) is required as a cofactor.

The protein localises to the cell inner membrane. The sequence is that of Protease HtpX from Shewanella sp. (strain ANA-3).